Consider the following 683-residue polypeptide: DNA ligase (683 aa).

NAD(+) contacts are provided by residues Asp-29–Asp-33, Ser-79–Leu-80, and Glu-109. The N6-AMP-lysine intermediate role is filled by Lys-111. NAD(+) is bound by residues Arg-132, Glu-172, Lys-288, and Lys-312. Zn(2+) is bound by residues Cys-406, Cys-409, Cys-425, and Cys-431. The BRCT domain maps to Ser-595–Thr-683.

It belongs to the NAD-dependent DNA ligase family. LigA subfamily. It depends on Mg(2+) as a cofactor. Requires Mn(2+) as cofactor.

The enzyme catalyses NAD(+) + (deoxyribonucleotide)n-3'-hydroxyl + 5'-phospho-(deoxyribonucleotide)m = (deoxyribonucleotide)n+m + AMP + beta-nicotinamide D-nucleotide.. In terms of biological role, DNA ligase that catalyzes the formation of phosphodiester linkages between 5'-phosphoryl and 3'-hydroxyl groups in double-stranded DNA using NAD as a coenzyme and as the energy source for the reaction. It is essential for DNA replication and repair of damaged DNA. The sequence is that of DNA ligase from Mycobacterium ulcerans (strain Agy99).